The chain runs to 222 residues: N-(5'-phosphoribosyl)anthranilate isomerase (222 aa).

It belongs to the TrpF family.

It carries out the reaction N-(5-phospho-beta-D-ribosyl)anthranilate = 1-(2-carboxyphenylamino)-1-deoxy-D-ribulose 5-phosphate. It participates in amino-acid biosynthesis; L-tryptophan biosynthesis; L-tryptophan from chorismate: step 3/5. This chain is N-(5'-phosphoribosyl)anthranilate isomerase, found in Brevibacillus brevis (strain 47 / JCM 6285 / NBRC 100599).